Here is a 250-residue protein sequence, read N- to C-terminus: Prophage antitermination protein Q homolog QuuQ (250 aa).

Belongs to the phage antitermination Q type 2 family.

In terms of biological role, positively regulate expression of some phage genes. Bacterial host RNA polymerase modified by antitermination proteins transcribes through termination sites that otherwise prevent expression of the regulated genes. This chain is Prophage antitermination protein Q homolog QuuQ (quuQ), found in Escherichia coli (strain K12).